Reading from the N-terminus, the 212-residue chain is Adenylate kinase (212 aa).

10–15 (GAGKGT) lines the ATP pocket. The interval 30-59 (STGDMFRAAMANQTEMGRLAKSYIDKGELV) is NMP. Residues Thr-31, Arg-36, 57 to 59 (ELV), 86 to 89 (GYPR), and Gln-93 contribute to the AMP site. The LID stretch occupies residues 127–159 (GRIINRKTGETFHKVFNPPVDYKEEDYYQREDD). ATP contacts are provided by residues Arg-128 and 137 to 138 (TF). AMP contacts are provided by Arg-156 and Arg-167. Gln-195 lines the ATP pocket.

It belongs to the adenylate kinase family. In terms of assembly, monomer.

It localises to the cytoplasm. The enzyme catalyses AMP + ATP = 2 ADP. The protein operates within purine metabolism; AMP biosynthesis via salvage pathway; AMP from ADP: step 1/1. Its function is as follows. Catalyzes the reversible transfer of the terminal phosphate group between ATP and AMP. Plays an important role in cellular energy homeostasis and in adenine nucleotide metabolism. The chain is Adenylate kinase from Streptococcus pyogenes serotype M3 (strain ATCC BAA-595 / MGAS315).